We begin with the raw amino-acid sequence, 459 residues long: Polycomb protein mes-6 (459 aa).

WD repeat units follow at residues 146-186, 192-231, 305-346, 370-409, and 415-454; these read SVGW…CLIV, CHAG…VKEH, MHSD…GEVE, SGSA…ETNP, and VGSR…VDAK.

The protein belongs to the WD repeat ESC family. In terms of assembly, interacts directly with the N-terminal domain of mes-2. Forms a heterotrimeric complex with mes-2 and mes-3. Does not interact with mes-4. As to expression, in adults, it is predominantly expressed in the germline, and weakly expressed in intestinal cells.

Its subcellular location is the nucleus. In terms of biological role, polycomb group (PcG) protein. PcG proteins act by forming multiprotein complexes, which are required to maintain the transcriptionally repressive state of homeotic genes throughout development. In association with the nfya-1-NF-Y complex, may play a role in repressing the expression of the homeobox protein egl-5 in tissues such as the head. PcG proteins are not required to initiate repression, but to maintain it during later stages of development. The mes-2/mes-3/mes-6 complex may participate in the global inactivation of the X chromosomes in germline cells. The complex may act via methylation of histone H3 'Lys-27', rendering chromatin heritably changed in its expressibility. This complex is required to exclude mes-4 from the inactivated X-chromosomes in germline cells. Required for small-RNA-induced H3K27 trimethylation. This is Polycomb protein mes-6 from Caenorhabditis elegans.